The following is a 409-amino-acid chain: Terpredoxin reductase (409 aa).

7–38 is a binding site for FAD; it reads TTVIVGAGHAGTAAAFFLREFGYHGRVLLLSA. Position 151-159 (151-159) interacts with NAD(+); that stretch reads GGGFIGLEI.

Requires FAD as cofactor.

Its function is as follows. The oxidation of alpha-terpineol by cytochrome p450-TERP requires the participation of a flavoprotein, terpredoxin reductase, and an iron-sulfur protein, terpredoxin, to mediate the transfer of electrons from NADH to P450 for oxygen activation. The protein is Terpredoxin reductase (terPA) of Pseudomonas sp.